Consider the following 365-residue polypeptide: NAD(P)H-quinone oxidoreductase subunit 1, chloroplastic (365 aa).

A run of 6 helical transmembrane segments spans residues 32-52 (LFPI…IVWL), 98-118 (YLFS…YLII), 129-149 (LSIG…GLLM), 257-279 (LFYV…LYLG), 302-322 (VFGT…FLFI), and 338-358 (LLNL…LLTT).

The protein belongs to the complex I subunit 1 family. In terms of assembly, NDH is composed of at least 16 different subunits, 5 of which are encoded in the nucleus.

It is found in the plastid. Its subcellular location is the chloroplast thylakoid membrane. It catalyses the reaction a plastoquinone + NADH + (n+1) H(+)(in) = a plastoquinol + NAD(+) + n H(+)(out). It carries out the reaction a plastoquinone + NADPH + (n+1) H(+)(in) = a plastoquinol + NADP(+) + n H(+)(out). NDH shuttles electrons from NAD(P)H:plastoquinone, via FMN and iron-sulfur (Fe-S) centers, to quinones in the photosynthetic chain and possibly in a chloroplast respiratory chain. The immediate electron acceptor for the enzyme in this species is believed to be plastoquinone. Couples the redox reaction to proton translocation, and thus conserves the redox energy in a proton gradient. The sequence is that of NAD(P)H-quinone oxidoreductase subunit 1, chloroplastic from Spinacia oleracea (Spinach).